The sequence spans 428 residues: Probable protein phosphatase 2C 5 (428 aa).

The PPM-type phosphatase domain maps to 25–297 (RSEKVEKPFV…DDTTCVVVDI (273 aa)). The Mn(2+) site is built by Asp-73, Gly-74, Asp-249, and Asp-288.

The protein belongs to the PP2C family. Requires Mg(2+) as cofactor. Mn(2+) serves as cofactor.

The catalysed reaction is O-phospho-L-seryl-[protein] + H2O = L-seryl-[protein] + phosphate. It catalyses the reaction O-phospho-L-threonyl-[protein] + H2O = L-threonyl-[protein] + phosphate. The chain is Probable protein phosphatase 2C 5 from Arabidopsis thaliana (Mouse-ear cress).